The following is a 348-amino-acid chain: Inositol 2-dehydrogenase/D-chiro-inositol 3-dehydrogenase (348 aa).

It belongs to the Gfo/Idh/MocA family. As to quaternary structure, homotetramer.

The enzyme catalyses myo-inositol + NAD(+) = scyllo-inosose + NADH + H(+). It catalyses the reaction 1D-chiro-inositol + NAD(+) = scyllo-inosine + NADH + H(+). The protein operates within polyol metabolism; myo-inositol degradation into acetyl-CoA; acetyl-CoA from myo-inositol: step 1/7. In terms of biological role, involved in the oxidation of myo-inositol (MI) and D-chiro-inositol (DCI) to 2-keto-myo-inositol (2KMI or 2-inosose) and 1-keto-D-chiro-inositol (1KDCI), respectively. This Halalkalibacterium halodurans (strain ATCC BAA-125 / DSM 18197 / FERM 7344 / JCM 9153 / C-125) (Bacillus halodurans) protein is Inositol 2-dehydrogenase/D-chiro-inositol 3-dehydrogenase.